The chain runs to 395 residues: Synaptotagmin-8 (395 aa).

Residues methionine 1–threonine 44 are Extracellular-facing. A helical; Signal-anchor for type III membrane protein transmembrane segment spans residues leucine 45–cysteine 65. Residues cysteine 66–serine 395 are Cytoplasmic-facing. C2 domains are found at residues glutamine 113 to tyrosine 229 and glutamine 241 to histidine 370.

This sequence belongs to the synaptotagmin family. In terms of assembly, homodimer or homooligomer. Homodimerization and homooligomerization do not depend on Ca(2+). Interacts with SYNCRIP isoform 2 C-terminus. Binds inositol 1,3,4,5-tetrakisphosphate (IP4). Binds to AP2 in a Ca(2+)-independent manner. Interacts with STX1A, STX1B and STX2; the interaction is Ca(2+)-dependent. Ubiquitous. Detected in testis and brain. Expressed in primary neurons, neuroendocrine and endocrine cells.

It localises to the cytoplasm. Its subcellular location is the cell membrane. The protein resides in the cytoplasmic vesicle. It is found in the secretory vesicle. The protein localises to the acrosome. Functionally, involved in the trafficking and exocytosis of secretory vesicles in non-neuronal tissues. Mediates Ca(2+)-regulation of exocytosis acrosomal reaction in sperm. May mediate Ca(2+)-regulation of exocytosis in insulin secreted cells. The sequence is that of Synaptotagmin-8 (Syt8) from Mus musculus (Mouse).